The chain runs to 416 residues: Putative serine protease HhoB (416 aa).

The signal sequence occupies residues 1 to 25; it reads MAIHLKASHLGVAVLLLLFGGAIGA. The span at 35–53 shows a compositional bias: polar residues; it reads GQNHSSPDSPVNTSPQSLT. The segment at 35–57 is disordered; sequence GQNHSSPDSPVNTSPQSLTPAPV. Residues 320-398 enclose the PDZ domain; it reads EMTKQLRTSG…PLAIAVKRGQ (79 aa).

The protein belongs to the peptidase S1C family.

In terms of biological role, a putative protease, its function overlaps that of the related putative proteases HtrA and HhoA. This chain is Putative serine protease HhoB (hhoB), found in Synechocystis sp. (strain ATCC 27184 / PCC 6803 / Kazusa).